A 290-amino-acid polypeptide reads, in one-letter code: Uridine diphosphate glucose pyrophosphatase NUDT22 (290 aa).

The substrate site is built by F56, Y87, R139, A144, D151, H156, and E158. A Nudix hydrolase domain is found at 118–285 (ADPLGVGAAL…KGAIFLYNRV (168 aa)). Residues 175–196 (GELVVHELFSSVLQEICDEVNV) carry the Nudix box motif. Mg(2+) contacts are provided by E189 and E193. S274 contacts substrate.

The protein belongs to the Nudix family. Requires Mg(2+) as cofactor.

It catalyses the reaction UDP-sugar + H2O = UMP + alpha-D-aldose 1-phosphate.. Its function is as follows. Hydrolyzes UDP-glucose to glucose 1-phosphate and UMP and UDP-galactose to galactose 1-phosphate and UMP. Preferred substrate is UDP-glucose. The chain is Uridine diphosphate glucose pyrophosphatase NUDT22 (NUDT22) from Bos taurus (Bovine).